Reading from the N-terminus, the 387-residue chain is 3-ketoacyl-CoA thiolase (387 aa).

Cys91 acts as the Acyl-thioester intermediate in catalysis. Active-site proton acceptor residues include His343 and Cys373.

Belongs to the thiolase-like superfamily. Thiolase family. As to quaternary structure, heterotetramer of two alpha chains (FadB) and two beta chains (FadA).

The protein resides in the cytoplasm. It catalyses the reaction an acyl-CoA + acetyl-CoA = a 3-oxoacyl-CoA + CoA. Its pathway is lipid metabolism; fatty acid beta-oxidation. Catalyzes the final step of fatty acid oxidation in which acetyl-CoA is released and the CoA ester of a fatty acid two carbons shorter is formed. This chain is 3-ketoacyl-CoA thiolase, found in Escherichia coli O9:H4 (strain HS).